The sequence spans 318 residues: Protein-L-histidine N-pros-methyltransferase (318 aa).

The signal sequence occupies residues 1–18 (MRLLAGWLCLSLASVWLA). Residue N35 is glycosylated (N-linked (GlcNAc...) asparagine). Residues E174, N210, and Y295 each coordinate S-adenosyl-L-homocysteine.

This sequence belongs to the METTL9 family.

The protein localises to the endoplasmic reticulum. The protein resides in the mitochondrion. It catalyses the reaction L-histidyl-[protein] + S-adenosyl-L-methionine = N(pros)-methyl-L-histidyl-[protein] + S-adenosyl-L-homocysteine + H(+). In terms of biological role, protein-histidine N-methyltransferase that specifically catalyzes 1-methylhistidine (pros-methylhistidine) methylation of target proteins. Specifically methylates the second His of proteins with a His-x-His (HxH) motif (where 'x' is preferably a small amino acid), while exploiting the first one as a recognition signature. Catalyzes methylation of target proteins such as S100A9, NDUFB3, SLC39A5, SLC39A7, ARMC6 and DNAJB12; 1-methylhistidine modification may affect the binding of zinc and other metals to its target proteins. Constitutes the main methyltransferase for the 1-methylhistidine modification in cell. This chain is Protein-L-histidine N-pros-methyltransferase, found in Homo sapiens (Human).